We begin with the raw amino-acid sequence, 389 residues long: Succinate--CoA ligase [ADP-forming] subunit beta (389 aa).

The region spanning 9–236 is the ATP-grasp domain; it reads RDLFEAHGVP…ERTEDPLEAK (228 aa). Residues lysine 45, 52 to 54, alanine 94, and glutamate 99 each bind ATP; that span reads GRG. Asparagine 191 and aspartate 205 together coordinate Mg(2+). Substrate-binding positions include asparagine 256 and 318–320; that span reads GIT.

Belongs to the succinate/malate CoA ligase beta subunit family. As to quaternary structure, heterotetramer of two alpha and two beta subunits. Mg(2+) serves as cofactor.

The enzyme catalyses succinate + ATP + CoA = succinyl-CoA + ADP + phosphate. It carries out the reaction GTP + succinate + CoA = succinyl-CoA + GDP + phosphate. It functions in the pathway carbohydrate metabolism; tricarboxylic acid cycle; succinate from succinyl-CoA (ligase route): step 1/1. Functionally, succinyl-CoA synthetase functions in the citric acid cycle (TCA), coupling the hydrolysis of succinyl-CoA to the synthesis of either ATP or GTP and thus represents the only step of substrate-level phosphorylation in the TCA. The beta subunit provides nucleotide specificity of the enzyme and binds the substrate succinate, while the binding sites for coenzyme A and phosphate are found in the alpha subunit. The protein is Succinate--CoA ligase [ADP-forming] subunit beta of Micrococcus luteus (strain ATCC 4698 / DSM 20030 / JCM 1464 / CCM 169 / CCUG 5858 / IAM 1056 / NBRC 3333 / NCIMB 9278 / NCTC 2665 / VKM Ac-2230) (Micrococcus lysodeikticus).